Consider the following 217-residue polypeptide: Nucleoredoxin-like protein 1 (217 aa).

Residues 1–164 (MASLFSGRIL…AAELLDRSFL (164 aa)) form the Thioredoxin domain. The segment covering 188-204 (VDRDVGRERGRNGRDSG) has biased composition (basic and acidic residues). The interval 188–217 (VDRDVGRERGRNGRDSGDPQGDAGTRAELW) is disordered.

This sequence belongs to the nucleoredoxin family. As to quaternary structure, interacts with isoform 1 of BSG. Expressed in the retina (at protein level). Expressed predominantly by photoreceptors in both the inner and outer nuclear layer (at protein level). Not expressed in the testis, spleen, intestine, lung, cerebellum, or kidney.

The protein resides in the cell projection. The protein localises to the cilium. It localises to the photoreceptor outer segment. Plays an important role in retinal cone photoreceptor survival. In association with glucose transporter SLC16A1/GLUT1 and BSG, promotes retinal cone survival by enhancing aerobic glycolysis and accelerating the entry of glucose into photoreceptors. May play a role in cone cell viability, slowing down cone degeneration, does not seem to play a role in degenerating rods. The chain is Nucleoredoxin-like protein 1 (Nxnl1) from Mus musculus (Mouse).